We begin with the raw amino-acid sequence, 590 residues long: Phosphate-repressible phosphate permease pho-4 (590 aa).

Transmembrane regions (helical) follow at residues 6–26 (FDYL…NIGA), 44–64 (YLQA…GVGA), 85–105 (ALLM…LTMA), 118–138 (IMGG…VQWV), 149–169 (VFLA…IIFL), 186–206 (FVMV…LLLW), 220–240 (IAGT…IFLM), and 246–266 (IVIL…PLLL). The Cytoplasmic portion of the chain corresponds to 267-466 (RRGEVPPPPA…GALPEKGKAD (200 aa)). Residues 297-361 (ARRAAQNGDS…PQIKTMVGPR (65 aa)) form a disordered region. The span at 313–322 (VTSSTSNPSA) shows a compositional bias: polar residues. Positions 325 to 345 (DGEKGATITKDDSSYSHDHSE) are enriched in basic and acidic residues. Helical transmembrane passes span 467–487 (VPVW…WTYG), 506–525 (GFSM…RLKL), 527–547 (VSTT…SGTW), and 561–581 (GWFI…GIII).

It belongs to the inorganic phosphate transporter (PiT) (TC 2.A.20) family.

It localises to the cell membrane. With respect to regulation, phosphate transport activity is competitively inhibited by vanadate and arsenate. Functionally, high-affinity transporter for external inorganic phosphate. Acts probably as a sodium-phosphate symporter. Component of the high affinity phosphate transport system II (ptsII) necessary for scavenging phosphorus from the environment under conditions of limiting phosphorus. In Neurospora crassa (strain ATCC 24698 / 74-OR23-1A / CBS 708.71 / DSM 1257 / FGSC 987), this protein is Phosphate-repressible phosphate permease pho-4.